The chain runs to 337 residues: Palmitoyltransferase ZDHHC15 (337 aa).

Residues 1 to 20 lie on the Cytoplasmic side of the membrane; the sequence is MRRGWKMALSGGLRCCRRVL. The helical transmembrane segment at 21 to 41 threads the bilayer; that stretch reads SWVPVLVIVLVVLWSYYAYVF. At 42 to 56 the chain is on the lumenal side; sequence ELCLVTVLSPAEKVI. Residues 57-77 form a helical membrane-spanning segment; sequence YLILYHAIFVFFAWTYWKSIF. Over 78–172 the chain is Cytoplasmic; it reads TLPQQPNQKF…NNCIGFSNYK (95 aa). The DHHC domain maps to 129–179; sequence RFCDRCHLIKPDRCHHCSVCAMCVLKMDHHCPWVNNCIGFSNYKFFLQFLA. Residues Cys131, Cys134, His144, Cys145, Cys148, Cys151, and His158 each coordinate Zn(2+). Cys159 serves as the catalytic S-palmitoyl cysteine intermediate. Cys165 lines the Zn(2+) pocket. The chain crosses the membrane as a helical span at residues 173–193; it reads FFLQFLAYSVLYCLYIATTVF. The Lumenal portion of the chain corresponds to 194–210; it reads SYFIKYWRGELPSVRSK. Residues 211-234 form a helical membrane-spanning segment; that stretch reads FHVLFLLFVACMFFVSLVILFGYH. The Cytoplasmic portion of the chain corresponds to 235 to 337; it reads CWLVSRNKTT…LSSLAVESET (103 aa). A disordered region spans residues 293 to 337; that stretch reads HSFPMRSMNESQNPLLANEEPWEDNEDESQDYPEGLSSLAVESET. Positions 312–323 are enriched in acidic residues; that stretch reads EPWEDNEDESQD.

The protein belongs to the DHHC palmitoyltransferase family. Post-translationally, autopalmitoylated (in vitro). In terms of tissue distribution, in brain, expressed in both excitatory and inhibitory neurons but not expressed by glial cells.

The protein resides in the golgi apparatus membrane. Its subcellular location is the postsynaptic density. It catalyses the reaction L-cysteinyl-[protein] + hexadecanoyl-CoA = S-hexadecanoyl-L-cysteinyl-[protein] + CoA. The enzyme catalyses L-cysteinyl-[protein] + tetradecanoyl-CoA = S-tetradecanoyl-L-cysteinyl-[protein] + CoA. The catalysed reaction is L-cysteinyl-[protein] + octadecanoyl-CoA = S-octadecanoyl-L-cysteinyl-[protein] + CoA. Functionally, palmitoyltransferase that catalyzes the addition of palmitate onto various protein substrates. Has no stringent fatty acid selectivity and in addition to palmitate can also transfer onto target proteins myristate from tetradecanoyl-CoA and stearate from octadecanoyl-CoA. Palmitoylates IGF2R and SORT1, promoting their partitioning to an endosomal membrane subdomain where they can interact with the retromer cargo-selective complex. Thereby, regulates retrograde transport from endosomes to the Golgi apparatus of these lysosomal sorting receptors and plays a role in trafficking of lysosomal proteins. In the nervous system, catalyzes the palmitoylation of DLG4/PSD95 and regulates its synaptic clustering and function in synaptogenesis. Could be involved in the differentiation of dopaminergic neurons and the development of the diencephalon. Could also catalyze the palmitoylation of GAP43. Could also palmitoylate DNAJC5 and regulate its localization to the Golgi membrane. Could also palmitoylate FYN as shown in vitro. May palmitoylate CALHM3 subunit of gustatory voltage-gated ion channels and modulate channel gating and kinetics. The protein is Palmitoyltransferase ZDHHC15 of Rattus norvegicus (Rat).